Reading from the N-terminus, the 221-residue chain is Oligoribonuclease (221 aa).

One can recognise an Exonuclease domain in the interval 21 to 186 (LVWVDLEMTG…ADIVESIREL (166 aa)). Tyr-143 is an active-site residue.

It belongs to the oligoribonuclease family.

The protein resides in the cytoplasm. Functionally, 3'-to-5' exoribonuclease specific for small oligoribonucleotides. This Corynebacterium efficiens (strain DSM 44549 / YS-314 / AJ 12310 / JCM 11189 / NBRC 100395) protein is Oligoribonuclease.